The following is a 157-amino-acid chain: Protein Smg homolog (157 aa).

Belongs to the Smg family.

The chain is Protein Smg homolog from Xanthomonas oryzae pv. oryzae (strain MAFF 311018).